A 1034-amino-acid chain; its full sequence is Sodium bicarbonate cotransporter 3 (1034 aa).

2 disordered regions span residues 1–31 (MEAD…KTSS) and 53–99 (HVPF…SQRV). Topologically, residues 1-476 (MEADGAGEQM…DFKDALSLQC (476 aa)) are extracellular. A phosphoserine mark is found at serine 57, serine 60, serine 89, and serine 155. Basic residues predominate over residues 60-77 (SRRRHKHRGHKHHHRRRK). Residues 78–90 (DKDSDKEDGRESP) are compositionally biased toward basic and acidic residues. N-linked (GlcNAc...) asparagine glycosylation is present at asparagine 176. 6 positions are modified to phosphoserine: serine 238, serine 250, serine 260, methionine 263, serine 268, and serine 271. A compositionally biased stretch (polar residues) spans 250–260 (SAPGNLDNSKS). The disordered stretch occupies residues 250–276 (SAPGNLDNSKSGEMKGNGSGGSRENST). Asparagine 274 carries N-linked (GlcNAc...) asparagine glycosylation. A phosphoserine mark is found at serine 275 and serine 424. A helical membrane pass occupies residues 477 to 497 (LASILFLYCACMSPVITFGGL). The Cytoplasmic portion of the chain corresponds to 498–505 (LGEATEGR). A helical membrane pass occupies residues 506–526 (ISAIESLFGASLTGIAYSLFA). The Extracellular portion of the chain corresponds to 527 to 563 (GQPLTILGSTGPVLVFEKILFKFCRDYHLSYLSLRTS). Residues 564 to 584 (IGLWTSFLCIVLVATDASSLV) form a helical membrane-spanning segment. Residues 585–593 (CYITRFTEE) lie on the Cytoplasmic side of the membrane. A helical membrane pass occupies residues 594 to 614 (AFAALICIIFIYEALEKLFHL). At 615 to 685 (GEIYAFNMHN…MFVGSACGPH (71 aa)) the chain is on the extracellular side. Cysteine 634 and cysteine 636 form a disulfide bridge. N-linked (GlcNAc...) asparagine glycosylation is found at asparagine 644, asparagine 654, and asparagine 664. Cysteine 670 and cysteine 682 form a disulfide bridge. Residues 686–706 (GPYVPDVLFWCVVLFFTTFFL) form a helical membrane-spanning segment. At 707–729 (SSFLKQFKTKGYFPTKVRSTISD) the chain is on the cytoplasmic side. The helical transmembrane segment at 730 to 750 (FAVFLTIVIMVAIDYLVGIPS) threads the bilayer. Residues 751 to 776 (PKLHVPEKFEPTDPSRGWIISPLGDN) lie on the Extracellular side of the membrane. The helical transmembrane segment at 777–797 (PWWTLLIAAVPALLCTILIFM) threads the bilayer. Topologically, residues 798-812 (DQQITAVIINRKEHK) are cytoplasmic. Residues 813–833 (LKFIPMPVLYGVFLYMGVSSL) form a helical membrane-spanning segment. The tract at residues 815–915 (FIPMPVLYGV…MDLCFTKREL (101 aa)) is essential for cell membrane localization and transport activity. The Extracellular portion of the chain corresponds to 834–876 (KGIQFFDRIKLFGMPAKHQPDLIYLRYVPLWKVHVFTVVQLTC). The helical transmembrane segment at 877–897 (LVLLWVIKASAAAVVFPMMVL) threads the bilayer. Residues 898-1034 (ALVFVRKLMD…KKYMDAETSL (137 aa)) are Cytoplasmic-facing. The tract at residues 918–920 (LDD) is CA2-binding. The interval 926–946 (KKKKEDDKKKKEKEEAERMLQ) is disordered. The residue at position 951 (threonine 951) is a Phosphothreonine. A phosphoserine mark is found at serine 960 and serine 1033. Residues 1031 to 1034 (ETSL) carry the PDZ-binding motif.

It belongs to the anion exchanger (TC 2.A.31) family. As to quaternary structure, forms a complex with ATP6V1B1 and NHERF1/EBP50. Interacts in a pH dependent-manner with CA2/carbonic anhydrase 2. Interacts with CFTR through NHERF1/EBP50. Interacts with USH1C. Expressed in the spiral ligament throughout the cochlea and in photoreceptors of the outer plexiform layer of the retina (at protein level).

It is found in the basolateral cell membrane. The protein localises to the apical cell membrane. It localises to the cell projection. The protein resides in the stereocilium. Its subcellular location is the cell membrane. The enzyme catalyses hydrogencarbonate(in) + Na(+)(in) = hydrogencarbonate(out) + Na(+)(out). With respect to regulation, activity is inhibited by 4,4'-di-isothiocyanatostilbene-2,2'-disulfonic acid (DIDS - an inhibitor of several anion channels and transporters). Electroneutral sodium- and bicarbonate-dependent cotransporter with a Na(+):HCO3(-) 1:1 stoichiometry. Mediates the sodium-dependent bicarbonate transport important for pH recovery after acid load as well as for regulation of steady-state pH in the duodenum and vascular smooth muscle cells. Plays a key role in macrophage acidification, mediating bicarbonate import into the cytoplasm which is crucial for net acid extrusion and maintenance of cytoplasmic pH during phagocytosis. Provides cellular bicarbonate for de novo purine and pyrimidine synthesis and is a key mediator of de novo nucleotide synthesis downstream of mTORC1 signaling in proliferating cells. May be involved in maintaining locomotor activity, exploratory behavior, and hearing. This Mus musculus (Mouse) protein is Sodium bicarbonate cotransporter 3 (Slc4a7).